The primary structure comprises 198 residues: Putative glutathione S-transferase alpha-2 (198 aa).

Serine 2 carries the N-acetylserine modification. The GST N-terminal domain maps to 5 to 81; sequence SVPSLTYFQG…YIAKKHNFMG (77 aa). Residues tyrosine 11, arginine 45, 52 to 53, and 65 to 66 contribute to the glutathione site; these read QL and QS. Positions 83 to 198 constitute a GST C-terminal domain; it reads NLEEEFLVDQ…YIKERPETKF (116 aa).

Belongs to the GST superfamily. Alpha family.

It carries out the reaction RX + glutathione = an S-substituted glutathione + a halide anion + H(+). Conjugation of reduced glutathione to a wide number of exogenous and endogenous hydrophobic electrophiles. The polypeptide is Putative glutathione S-transferase alpha-2 (gsta2-1) (Dictyostelium discoideum (Social amoeba)).